We begin with the raw amino-acid sequence, 128 residues long: Holin-like protein CidA (128 aa).

4 helical membrane-spanning segments follow: residues 4–24 (LLLT…INWV), 26–46 (ALLH…FTLL), 59–79 (GAAW…VGVI), and 88–108 (FGVS…VSTG).

It belongs to the CidA/LrgA family. CidA subfamily.

It localises to the cell membrane. Functionally, increases the activity of extracellular murein hydrolases possibly by mediating their export via hole formation. Inhibited by the antiholin-like proteins LrgAB. In an unstressed cell, the LrgAB products probably inhibit the function of the CidA protein. When a cell is stressed by the addition of antibiotics or by other factors in the environment, CidA possibly oligomerizes within the bacterial cell membrane, creating lesions that disrupt the proton motive force, which in turn results in loss of cell viability. These lesions are also hypothesized to regulate the subsequent cell lysis by either allowing the murein hydrolases access to the cell wall substrate and/or regulating their activity by a possible change in the cell wall pH that results from loss of membrane potential. This is Holin-like protein CidA from Bacillus subtilis (strain 168).